A 52-amino-acid chain; its full sequence is Rubredoxin (52 aa).

Met-1 carries the post-translational modification N-formylmethionine; partial. In terms of domain architecture, Rubredoxin-like spans 1–52 (MKKYGCLVCGYVYDPAKGDPDHGIAPGTAFEDLPADWVCPLCGVSKDEFEPL). Fe cation contacts are provided by Cys-6, Cys-9, Cys-39, and Cys-42.

Belongs to the rubredoxin family. It depends on Fe(3+) as a cofactor. Observed in four forms, with and without iron, and with and without formylation at Met-1.

Its function is as follows. Rubredoxin is a small nonheme, iron protein lacking acid-labile sulfide. Its single Fe, chelated to 4 Cys, functions as an electron acceptor and may also stabilize the conformation of the molecule. In Heliobacterium mobile (Heliobacillus mobilis), this protein is Rubredoxin.